The chain runs to 37 residues: Large ribosomal subunit protein bL36 (37 aa).

It belongs to the bacterial ribosomal protein bL36 family.

This chain is Large ribosomal subunit protein bL36, found in Dehalococcoides mccartyi (strain ATCC BAA-2266 / KCTC 15142 / 195) (Dehalococcoides ethenogenes (strain 195)).